We begin with the raw amino-acid sequence, 251 residues long: DNA-directed RNA polymerase I subunit rpa34 (251 aa).

Disordered stretches follow at residues 1–66 and 163–251; these read MAKS…VLTT and PLVP…KEKN. Over residues 8–17 the composition is skewed to acidic residues; that stretch reads VNEESSEDES. Ser-13 is modified (phosphoserine). Residues 23 to 32 show a composition bias toward basic and acidic residues; the sequence is EDQHSSKEPE. Over residues 34-46 the composition is skewed to polar residues; sequence SVESNNHGESNAQ. Basic and acidic residues-rich tracts occupy residues 190–201 and 212–237; these read AEPKSGIKEHIL and LQNK…EEKP. A compositionally biased stretch (basic residues) spans 238-251; sequence KKKKQKKSSKKEKN.

The protein belongs to the eukaryotic RPA34 RNA polymerase subunit family. Component of the RNA polymerase I (Pol I) complex.

It is found in the nucleus. It localises to the nucleolus. In terms of biological role, DNA-dependent RNA polymerase catalyzes the transcription of DNA into RNA using the four ribonucleoside triphosphates as substrates. Component of RNA polymerase I which synthesizes ribosomal RNA precursors. In Schizosaccharomyces pombe (strain 972 / ATCC 24843) (Fission yeast), this protein is DNA-directed RNA polymerase I subunit rpa34 (rpa34).